Reading from the N-terminus, the 141-residue chain is Nucleoside diphosphate kinase (141 aa).

6 residues coordinate ATP: lysine 11, phenylalanine 59, arginine 87, threonine 93, arginine 104, and asparagine 114. The active-site Pros-phosphohistidine intermediate is histidine 117.

This sequence belongs to the NDK family. Homotetramer. It depends on Mg(2+) as a cofactor.

Its subcellular location is the cytoplasm. It carries out the reaction a 2'-deoxyribonucleoside 5'-diphosphate + ATP = a 2'-deoxyribonucleoside 5'-triphosphate + ADP. The catalysed reaction is a ribonucleoside 5'-diphosphate + ATP = a ribonucleoside 5'-triphosphate + ADP. Its function is as follows. Major role in the synthesis of nucleoside triphosphates other than ATP. The ATP gamma phosphate is transferred to the NDP beta phosphate via a ping-pong mechanism, using a phosphorylated active-site intermediate. In Haemophilus influenzae (strain 86-028NP), this protein is Nucleoside diphosphate kinase.